The sequence spans 73 residues: Protein F9 homolog (73 aa).

The Virion surface segment spans residues 1–34 (GHAAANCALARVATALTRRVPASRHGLAEGGTPP). A helical transmembrane segment spans residues 35-55 (WTLLLAVAAVTVLGVVAVSLL). Residues 56–73 (RRALRVRYRFARPAALRA) are Intravirion-facing.

This sequence belongs to the chordopoxvirinae L1 protein family.

Its subcellular location is the virion membrane. In Capra hircus (Goat), this protein is Protein F9 homolog.